Reading from the N-terminus, the 495-residue chain is Cysteine--tRNA ligase (495 aa).

C35 lines the Zn(2+) pocket. Positions 37 to 47 match the 'HIGH' region motif; that stretch reads PTVYSNVHLGN. Positions 230, 255, and 259 each coordinate Zn(2+). Residues 287–291 carry the 'KMSKS' region motif; the sequence is KMSKS. Residue K290 coordinates ATP.

It belongs to the class-I aminoacyl-tRNA synthetase family. Monomer. The cofactor is Zn(2+).

The protein resides in the cytoplasm. It catalyses the reaction tRNA(Cys) + L-cysteine + ATP = L-cysteinyl-tRNA(Cys) + AMP + diphosphate. This chain is Cysteine--tRNA ligase, found in Flavobacterium psychrophilum (strain ATCC 49511 / DSM 21280 / CIP 103535 / JIP02/86).